A 554-amino-acid polypeptide reads, in one-letter code: MQKEKVWDKLSTDTEERMNAANELFSDRKVVPSQNGVALLEAVIRAGDRINLEGNNQKQADFLAECLGSCDSEKINNLHMVQSAVPLPIHLDIFDKGIAKKLDFAYGGPMAAKVAEFLREGKLELGAIHTYLELFARYFMDLTPRVSLICAYEGDKDGNLYTGFNTEDTPVIAEATKFRQGIVIAQVNKLVDKVQRVDIPGEWVDAVIESPKPFYLEPLFTRDPANITDTQVLMGMMALKGIYGEYGVQRLNHGIGFFTAAIELLLPTYGNELGLKGKICKHFALNPHPTMIPAIEDGWVESIHSFGGELGMQKYCEARPDIFFIGPDGSMRSNRAYSQTAGHYATDMFIGGTLQIDKYGNSSTATASRVAGFGGAPNMGCDAKGRRHVTDSWLKCGAEFEDQAALLGDMPRGKRLVVQMQETFKEKMDPSFVEKLDAWNLAKNANLDLAPVMIYSDDLTHIVTEEGIAYLAKCRGLEERMAAIRGVAGYTEVGLSADPKETKTLRERGIVKTPEDLGIDRSRANRSMLAAKSVKDLVDCSGGLYEPPARFVNW.

It localises to the cytoplasm. The enzyme catalyses acetyl-[ACP] + malonate = malonyl-[ACP] + acetate. In terms of biological role, alpha subunit of the biotin-independent and biotin-dependent malonate decarboxylase multienzyme complex (EC 4.1.1.88 and EC 7.2.4.4, respectively). Acts as an acyl-carrier protein (ACP) transferase component. This first step in malonate decarboxylation involves the exchange of an acetyl thioester residue bound to the activated ACP subunit for a malonyl thioester residue. Has a weak activity with acetyl-CoA as substrate. In Malonomonas rubra, this protein is Acetyl-S-ACP:malonate ACP transferase (madA).